The sequence spans 583 residues: Probable lysosomal cobalamin transporter (583 aa).

The next 10 helical transmembrane spans lie at 8–28 (LIWA…SVFI), 41–61 (VILT…LVPV), 95–115 (IVYY…IPFI), 145–165 (TVSF…VPVA), 188–208 (ALTF…VLYT), 312–332 (LLSG…MLLT), 347–367 (GYIL…VQSA), 375–395 (VIFT…ISAV), 418–438 (LLAT…TSMI), and 506–526 (FFGA…LLVM). A compositionally biased stretch (acidic residues) spans 541 to 552 (LDEDAEEAEEES). Residues 541-562 (LDEDAEEAEEESLLANTRGRAE) form a disordered region.

This sequence belongs to the LIMR family. LMBRD1 subfamily.

It is found in the lysosome membrane. In terms of biological role, probable lysosomal cobalamin transporter. Required to export cobalamin from lysosomes allowing its conversion to cofactors. The protein is Probable lysosomal cobalamin transporter of Aspergillus oryzae (strain ATCC 42149 / RIB 40) (Yellow koji mold).